The primary structure comprises 390 residues: 3-ketosteroid-9-alpha-monooxygenase, oxygenase component (390 aa).

The 103-residue stretch at 32–134 (WHCLGLLRDF…TLERNGQLYV (103 aa)) folds into the Rieske domain. [2Fe-2S] cluster-binding residues include Cys73, His75, Cys92, and His95. Fe cation-binding residues include Asn181, His187, His192, and Asp311.

In terms of assembly, homotrimer. The two-component system 3-ketosteroid-9-alpha-monooxygenase is composed of an oxygenase component KshA and a reductase component KshB. [2Fe-2S] cluster is required as a cofactor. It depends on Fe cation as a cofactor.

The enzyme catalyses androsta-1,4-diene-3,17-dione + 2 reduced [2Fe-2S]-[ferredoxin] + O2 + 2 H(+) = 9alpha-hydroxyandrosta-1,4-diene-3,17-dione + 2 oxidized [2Fe-2S]-[ferredoxin] + H2O. It participates in steroid metabolism; cholesterol degradation. Probably involved in the degradation of cholesterol. In vitro, catalyzes the introduction of a 9alpha-hydroxyl moiety into the ring B of 3-ketosteroid substrates such as 1,4-androstadiene-3,17-dione (ADD), 4-androstene-3,17-dione (AD), 4-androstene-17beta-ol-3-one (testosterone), 4-pregnene-3,20-dione (progesterone), 19-nor-4-androstene-3,17-dione, 1-(5alpha)-androstene-3,17-dione, 5alpha-androstane-3,17-dione, 5beta-androstane-3,17-dione, 5alpha-androstane-17beta-ol-3-one (stanolon), 11beta-hydrocortisone, 3-oxo-23,24-bisnorcholesta-4-en-22-oate (4-BNC), 23,24-bisnorcholesta-4-ene-22-oate, 3-oxo-23,24-bisnorcholesta-1,4-dien-22-oate (1,4-BNC) and 3-oxo-23,24-bisnorcholesta-1,4-dien-22-oyl-coenzyme A thioester (1,4-BNC-CoA). KshA5 has the broadest substrate range without a clear substrate preference and is active with Delta-4, Delta-1,4, 5alpha-H and 5beta-H steroids, as well as with steroids having bulky aliphatic side chains and an isopropionyl side chain at C17. In Rhodococcus rhodochrous, this protein is 3-ketosteroid-9-alpha-monooxygenase, oxygenase component.